A 158-amino-acid chain; its full sequence is Flagellar assembly factor FliW (158 aa).

It belongs to the FliW family. In terms of assembly, interacts with translational regulator CsrA and flagellin(s).

Its subcellular location is the cytoplasm. In terms of biological role, acts as an anti-CsrA protein, binds CsrA and prevents it from repressing translation of its target genes, one of which is flagellin. Binds to flagellin and participates in the assembly of the flagellum. The sequence is that of Flagellar assembly factor FliW from Syntrophus aciditrophicus (strain SB).